Consider the following 629-residue polypeptide: tRNA uridine 5-carboxymethylaminomethyl modification enzyme MnmG (629 aa).

13–18 (GGGHAG) contacts FAD. Residue 273 to 287 (GPRYCPSIEDKIVRF) coordinates NAD(+).

It belongs to the MnmG family. In terms of assembly, homodimer. Heterotetramer of two MnmE and two MnmG subunits. The cofactor is FAD.

The protein localises to the cytoplasm. In terms of biological role, NAD-binding protein involved in the addition of a carboxymethylaminomethyl (cmnm) group at the wobble position (U34) of certain tRNAs, forming tRNA-cmnm(5)s(2)U34. This Pseudoalteromonas translucida (strain TAC 125) protein is tRNA uridine 5-carboxymethylaminomethyl modification enzyme MnmG.